We begin with the raw amino-acid sequence, 675 residues long: Alpha-1,4-glucan:maltose-1-phosphate maltosyltransferase (675 aa).

3 residues coordinate alpha-maltose 1-phosphate: Lys256, Gln316, and Asp351. The active-site Nucleophile is the Asp386. Asn387 is a binding site for alpha-maltose 1-phosphate. Glu415 functions as the Proton donor in the catalytic mechanism. Alpha-maltose 1-phosphate is bound at residue 525-526 (KY).

This sequence belongs to the glycosyl hydrolase 13 family. GlgE subfamily. Homodimer.

The enzyme catalyses alpha-maltose 1-phosphate + [(1-&gt;4)-alpha-D-glucosyl](n) = [(1-&gt;4)-alpha-D-glucosyl](n+2) + phosphate. In terms of biological role, maltosyltransferase that uses maltose 1-phosphate (M1P) as the sugar donor to elongate linear or branched alpha-(1-&gt;4)-glucans. Is involved in a branched alpha-glucan biosynthetic pathway from trehalose, together with TreS, Mak and GlgB. This Corynebacterium glutamicum (strain ATCC 13032 / DSM 20300 / JCM 1318 / BCRC 11384 / CCUG 27702 / LMG 3730 / NBRC 12168 / NCIMB 10025 / NRRL B-2784 / 534) protein is Alpha-1,4-glucan:maltose-1-phosphate maltosyltransferase.